A 118-amino-acid chain; its full sequence is Non-specific lipid-transfer protein 1 (118 aa).

The signal sequence occupies residues 1–25; it reads MASLRVSCLVALMCMVVISAPMAEA. Disulfide bonds link C29-C76, C39-C53, C54-C99, and C74-C113.

Belongs to the plant LTP family.

Plant non-specific lipid-transfer proteins transfer phospholipids as well as galactolipids across membranes. May play a role in wax or cutin deposition in the cell walls of expanding epidermal cells and certain secretory tissues. The polypeptide is Non-specific lipid-transfer protein 1 (Lens culinaris (Lentil)).